Consider the following 548-residue polypeptide: Probable malate:quinone oxidoreductase (548 aa).

The protein belongs to the MQO family. FAD serves as cofactor.

It carries out the reaction (S)-malate + a quinone = a quinol + oxaloacetate. It participates in carbohydrate metabolism; tricarboxylic acid cycle; oxaloacetate from (S)-malate (quinone route): step 1/1. The polypeptide is Probable malate:quinone oxidoreductase (Escherichia coli O6:H1 (strain CFT073 / ATCC 700928 / UPEC)).